Consider the following 254-residue polypeptide: Triosephosphate isomerase (254 aa).

12–14 (NWK) lines the substrate pocket. The active-site Electrophile is the H99. Residue E169 is the Proton acceptor of the active site. Substrate contacts are provided by residues G175, S214, and 235–236 (GG).

The protein belongs to the triosephosphate isomerase family. In terms of assembly, homodimer.

Its subcellular location is the cytoplasm. It carries out the reaction D-glyceraldehyde 3-phosphate = dihydroxyacetone phosphate. It functions in the pathway carbohydrate biosynthesis; gluconeogenesis. Its pathway is carbohydrate degradation; glycolysis; D-glyceraldehyde 3-phosphate from glycerone phosphate: step 1/1. Its function is as follows. Involved in the gluconeogenesis. Catalyzes stereospecifically the conversion of dihydroxyacetone phosphate (DHAP) to D-glyceraldehyde-3-phosphate (G3P). The chain is Triosephosphate isomerase from Chelativorans sp. (strain BNC1).